The following is a 799-amino-acid chain: Protein translocase subunit SecA (799 aa).

ATP-binding positions include Gln85, 103 to 107, and Asp504; that span reads GEGKT.

Belongs to the SecA family. Monomer and homodimer. Part of the essential Sec protein translocation apparatus which comprises SecA, SecYEG and auxiliary proteins SecDF. Other proteins may also be involved.

Its subcellular location is the cell membrane. The protein resides in the cytoplasm. The enzyme catalyses ATP + H2O + cellular proteinSide 1 = ADP + phosphate + cellular proteinSide 2.. Part of the Sec protein translocase complex. Interacts with the SecYEG preprotein conducting channel. Has a central role in coupling the hydrolysis of ATP to the transfer of proteins into and across the cell membrane, serving as an ATP-driven molecular motor driving the stepwise translocation of polypeptide chains across the membrane. This is Protein translocase subunit SecA from Lactobacillus gasseri (strain ATCC 33323 / DSM 20243 / BCRC 14619 / CIP 102991 / JCM 1131 / KCTC 3163 / NCIMB 11718 / NCTC 13722 / AM63).